The chain runs to 266 residues: 4-hydroxy-tetrahydrodipicolinate reductase (266 aa).

10 to 15 (GPRGRM) is a binding site for NAD(+). K38 provides a ligand contact to NADP(+). NAD(+) is bound by residues 99–101 (GTT) and 125–128 (APNF). The Proton donor/acceptor role is filled by H155. A (S)-2,3,4,5-tetrahydrodipicolinate-binding site is contributed by H156. Residue K159 is the Proton donor of the active site. 165–166 (GT) lines the (S)-2,3,4,5-tetrahydrodipicolinate pocket.

Belongs to the DapB family.

The protein localises to the cytoplasm. It carries out the reaction (S)-2,3,4,5-tetrahydrodipicolinate + NAD(+) + H2O = (2S,4S)-4-hydroxy-2,3,4,5-tetrahydrodipicolinate + NADH + H(+). The enzyme catalyses (S)-2,3,4,5-tetrahydrodipicolinate + NADP(+) + H2O = (2S,4S)-4-hydroxy-2,3,4,5-tetrahydrodipicolinate + NADPH + H(+). It functions in the pathway amino-acid biosynthesis; L-lysine biosynthesis via DAP pathway; (S)-tetrahydrodipicolinate from L-aspartate: step 4/4. Its function is as follows. Catalyzes the conversion of 4-hydroxy-tetrahydrodipicolinate (HTPA) to tetrahydrodipicolinate. This chain is 4-hydroxy-tetrahydrodipicolinate reductase, found in Bacillus cereus (strain B4264).